Reading from the N-terminus, the 161-residue chain is Nucleotide-binding protein Tbd_1846 (161 aa).

It belongs to the YajQ family.

Nucleotide-binding protein. In Thiobacillus denitrificans (strain ATCC 25259 / T1), this protein is Nucleotide-binding protein Tbd_1846.